The primary structure comprises 199 residues: Probable cobalt-precorrin-6B C(15)-methyltransferase (decarboxylating) (199 aa).

S-adenosyl-L-methionine-binding positions include Thr24, 48–52 (GCGTG), Asp72, and Ala101.

This sequence belongs to the methyltransferase superfamily. Archaeal-type CbiT family.

It catalyses the reaction Co-precorrin-6B + S-adenosyl-L-methionine = Co-precorrin-7 + S-adenosyl-L-homocysteine + CO2. Its pathway is cofactor biosynthesis; adenosylcobalamin biosynthesis; cob(II)yrinate a,c-diamide from sirohydrochlorin (anaerobic route): step 8/10. Catalyzes the methylation of C-15 in cobalt-precorrin-6B followed by the decarboxylation of C-12 to form cobalt-precorrin-7. This chain is Probable cobalt-precorrin-6B C(15)-methyltransferase (decarboxylating), found in Saccharolobus islandicus (strain Y.N.15.51 / Yellowstone #2) (Sulfolobus islandicus).